A 175-amino-acid polypeptide reads, in one-letter code: Shikimate kinase (175 aa).

An ATP-binding site is contributed by Gly17–Thr22. Position 21 (Ser21) interacts with Mg(2+). Substrate-binding residues include Asp39, Arg63, and Gly85. Arg123 serves as a coordination point for ATP. Arg142 contributes to the substrate binding site. Gln159 is an ATP binding site.

The protein belongs to the shikimate kinase family. Monomer. Mg(2+) serves as cofactor.

It is found in the cytoplasm. The catalysed reaction is shikimate + ATP = 3-phosphoshikimate + ADP + H(+). Its pathway is metabolic intermediate biosynthesis; chorismate biosynthesis; chorismate from D-erythrose 4-phosphate and phosphoenolpyruvate: step 5/7. Catalyzes the specific phosphorylation of the 3-hydroxyl group of shikimic acid using ATP as a cosubstrate. This Photobacterium profundum (strain SS9) protein is Shikimate kinase.